Reading from the N-terminus, the 276-residue chain is Elongation factor Ts (276 aa).

The interval 80–83 (TDFV) is involved in Mg(2+) ion dislocation from EF-Tu.

This sequence belongs to the EF-Ts family.

It localises to the cytoplasm. In terms of biological role, associates with the EF-Tu.GDP complex and induces the exchange of GDP to GTP. It remains bound to the aminoacyl-tRNA.EF-Tu.GTP complex up to the GTP hydrolysis stage on the ribosome. This chain is Elongation factor Ts, found in Acidothermus cellulolyticus (strain ATCC 43068 / DSM 8971 / 11B).